The primary structure comprises 372 residues: MIYIIYRYRYCLVYTMDIFKELILKYPDENVLISPVSILSTLSILNHGAAGSTAEQLSKYIENVNENTPDDKKDDNNDMDVDVPYCATLAIANKIYCSDSIEFHASFLQKIKDDFQTVNFNNANQTKELINEWVKTMTNGKINSLLTSPLPINTRMTVVSAVHFKAMWKYPFSKHLTYTDKFYISKNIVTSVDMMVSTENDLQYVHINELFGGFSIIDIPYEGNSSMVIILPDDIEGLYNIEKHITEENFKKWCGKLYTKSIDLYMPKFKLKMTESYNLVPILENLGLTNIFGYYADFSKMCNETITVEKFLHKTFIDVNEEYTEASAITGVFMTNFSMVYRTKVYINHPFIYMIKDNTGRILFIGKYCYPQ.

The protein belongs to the serpin family. Poxviruses subfamily.

Its subcellular location is the host cytoplasm. Its function is as follows. Plays a role in mediating viral host range. May act to inhibit a caspase independent form of apoptosis to allow efficient virus replication in infected cells. In Homo sapiens (Human), this protein is Serine proteinase inhibitor 1 (OPG208).